We begin with the raw amino-acid sequence, 196 residues long: Imidazole glycerol phosphate synthase subunit HisH (196 aa).

Residues 2–196 (NVVILDTGCA…AKLLKNFLEM (195 aa)) enclose the Glutamine amidotransferase type-1 domain. Cys-77 functions as the Nucleophile in the catalytic mechanism. Catalysis depends on residues His-178 and Glu-180.

Heterodimer of HisH and HisF.

The protein localises to the cytoplasm. The catalysed reaction is 5-[(5-phospho-1-deoxy-D-ribulos-1-ylimino)methylamino]-1-(5-phospho-beta-D-ribosyl)imidazole-4-carboxamide + L-glutamine = D-erythro-1-(imidazol-4-yl)glycerol 3-phosphate + 5-amino-1-(5-phospho-beta-D-ribosyl)imidazole-4-carboxamide + L-glutamate + H(+). It catalyses the reaction L-glutamine + H2O = L-glutamate + NH4(+). The protein operates within amino-acid biosynthesis; L-histidine biosynthesis; L-histidine from 5-phospho-alpha-D-ribose 1-diphosphate: step 5/9. IGPS catalyzes the conversion of PRFAR and glutamine to IGP, AICAR and glutamate. The HisH subunit catalyzes the hydrolysis of glutamine to glutamate and ammonia as part of the synthesis of IGP and AICAR. The resulting ammonia molecule is channeled to the active site of HisF. In Shigella dysenteriae serotype 1 (strain Sd197), this protein is Imidazole glycerol phosphate synthase subunit HisH.